We begin with the raw amino-acid sequence, 314 residues long: MSVKPLVVSIMGPTASGKTAAALAVAEKIPAEIISVDSALVYREMDIGTAKPSAEELAQVPHHLIDILDPLDSYSVMQFRQDAIRLAAEISARGKLPLLVGGTMLYFKGLKDGLDALPQADAALRAELDAEAAAIGYPAMHAKLAALDPITAERLKPNDSQRIQRALEIIALTGQPMSALLAQAPKTELPFTLLPIALEPSDRSVLHTRIATRFDAMLKGGALLDEVKALRARGDLHLGLPSMRCVGYRQSWEYLDGAYSLAELRERGIAATRQLAKRQLTWLRSMDDRHIIDCLAPDASGAILQQIEIAQNRA.

12 to 19 lines the ATP pocket; sequence GPTASGKT. 14-19 is a binding site for substrate; sequence TASGKT. Interaction with substrate tRNA stretches follow at residues 37 to 40, 161 to 165, and 244 to 249; these read DSAL, QRIQR, and RCVGYR.

The protein belongs to the IPP transferase family. In terms of assembly, monomer. It depends on Mg(2+) as a cofactor.

It catalyses the reaction adenosine(37) in tRNA + dimethylallyl diphosphate = N(6)-dimethylallyladenosine(37) in tRNA + diphosphate. Its function is as follows. Catalyzes the transfer of a dimethylallyl group onto the adenine at position 37 in tRNAs that read codons beginning with uridine, leading to the formation of N6-(dimethylallyl)adenosine (i(6)A). This chain is tRNA dimethylallyltransferase, found in Janthinobacterium sp. (strain Marseille) (Minibacterium massiliensis).